Reading from the N-terminus, the 323-residue chain is Acetyl-coenzyme A carboxylase carboxyl transferase subunit alpha 1 (323 aa).

Positions 39-293 (RLSKKSQQLT…RRALGDSLRQ (255 aa)) constitute a CoA carboxyltransferase C-terminal domain.

It belongs to the AccA family. In terms of assembly, acetyl-CoA carboxylase is a heterohexamer composed of biotin carboxyl carrier protein (AccB), biotin carboxylase (AccC) and two subunits each of ACCase subunit alpha (AccA) and ACCase subunit beta (AccD).

Its subcellular location is the cytoplasm. It catalyses the reaction N(6)-carboxybiotinyl-L-lysyl-[protein] + acetyl-CoA = N(6)-biotinyl-L-lysyl-[protein] + malonyl-CoA. Its pathway is lipid metabolism; malonyl-CoA biosynthesis; malonyl-CoA from acetyl-CoA: step 1/1. Its function is as follows. Component of the acetyl coenzyme A carboxylase (ACC) complex. First, biotin carboxylase catalyzes the carboxylation of biotin on its carrier protein (BCCP) and then the CO(2) group is transferred by the carboxyltransferase to acetyl-CoA to form malonyl-CoA. Functionally, does not confer resistance to the endogenous polyketide antibiotic thailandamide, does not confer resistance to thailandamide when expressed in S.typhimurium. In Burkholderia thailandensis (strain ATCC 700388 / DSM 13276 / CCUG 48851 / CIP 106301 / E264), this protein is Acetyl-coenzyme A carboxylase carboxyl transferase subunit alpha 1.